The following is a 27-amino-acid chain: Conotoxin Lo6/7b (27 aa).

3 disulfides stabilise this stretch: Cys2–Cys16, Cys9–Cys19, and Cys15–Cys26. At Tyr27 the chain carries Tyrosine amide.

In terms of tissue distribution, expressed by the venom duct.

Its subcellular location is the secreted. 1 uM of this toxin does not show any effect on voltage-gated sodium and potassium channels. Does not show antibacterial activity on both Gram-negative and Gram-positive bacteria. This is Conotoxin Lo6/7b from Conasprella longurionis (Cone snail).